Reading from the N-terminus, the 359-residue chain is Nicotinate-nucleotide--dimethylbenzimidazole phosphoribosyltransferase (359 aa).

Glu-318 functions as the Proton acceptor in the catalytic mechanism.

It belongs to the CobT family. Homodimer.

The enzyme catalyses 5,6-dimethylbenzimidazole + nicotinate beta-D-ribonucleotide = alpha-ribazole 5'-phosphate + nicotinate + H(+). Its pathway is nucleoside biosynthesis; alpha-ribazole biosynthesis; alpha-ribazole from 5,6-dimethylbenzimidazole: step 1/2. In terms of biological role, catalyzes the synthesis of alpha-ribazole-5'-phosphate from nicotinate mononucleotide (NAMN) and 5,6-dimethylbenzimidazole (DMB). The chain is Nicotinate-nucleotide--dimethylbenzimidazole phosphoribosyltransferase from Escherichia coli O127:H6 (strain E2348/69 / EPEC).